The sequence spans 703 residues: Lethal(3)malignant brain tumor-like protein 2 (703 aa).

The segment at 1 to 85 (MEKPRGTEEA…NNRSLDGSGS (85 aa)) is disordered. The residue at position 13 (S13) is a Phosphoserine. Residues 15-25 (PMEEEEEDDLD) show a composition bias toward acidic residues. Residues 35 to 49 (SYNSSAGSESSSYLE) show a composition bias toward low complexity. The span at 50-60 (ESSEAENEDRE) shows a compositional bias: acidic residues. Residue S67 is modified to Phosphoserine. Residues 73–82 (SSANNRSLDG) show a composition bias toward polar residues. The FCS-type zinc-finger motif lies at 81–116 (DGSGSEPAVCEMCGIVGTREAFFSKTKRFCSVSCSR). Zn(2+) is bound by residues C90, C93, C110, and C114. MBT repeat units follow at residues 179 to 283 (FDWG…LVPP), 291 to 391 (TDWK…IKMS), 397 to 500 (MSHH…LTPP), and 508 to 604 (FAWE…LQPP). S338 carries the post-translational modification Phosphoserine. K405 participates in a covalent cross-link: Glycyl lysine isopeptide (Lys-Gly) (interchain with G-Cter in SUMO2). Positions 604-649 (PVSAEPNTPQKGKDTTKKKKKQFGKKRKRIPSAKTRPLRQGSKKPL) are disordered. A compositionally biased stretch (basic residues) spans 619–634 (TKKKKKQFGKKRKRIP). Residues K647 and K673 each participate in a glycyl lysine isopeptide (Lys-Gly) (interchain with G-Cter in SUMO2) cross-link. Positions 675–703 (EHQDISSLDRSPSPQLPLPIESIKQERNN) are disordered. S681, S685, and S687 each carry phosphoserine. K698 participates in a covalent cross-link: Glycyl lysine isopeptide (Lys-Gly) (interchain with G-Cter in SUMO1); alternate. K698 is covalently cross-linked (Glycyl lysine isopeptide (Lys-Gly) (interchain with G-Cter in SUMO2); alternate).

Part of the E2F6.com-1 complex in G0 phase composed of E2F6, MGA, MAX, TFDP1, CBX3, BAT8, EUHMTASE1, RING1, RNF2, MBLR, BAT8 and YAF2. In terms of processing, phosphorylated. In terms of tissue distribution, ubiquitous.

The protein localises to the nucleus. Functionally, putative Polycomb group (PcG) protein. PcG proteins maintain the transcriptionally repressive state of genes, probably via a modification of chromatin, rendering it heritably changed in its expressibility. Its association with a chromatin-remodeling complex suggests that it may contribute to prevent expression of genes that trigger the cell into mitosis. Binds to monomethylated and dimethylated 'Lys-20' on histone H4. Binds histone H3 peptides that are monomethylated or dimethylated on 'Lys-4', 'Lys-9' or 'Lys-27'. In Mus musculus (Mouse), this protein is Lethal(3)malignant brain tumor-like protein 2 (L3mbtl2).